Reading from the N-terminus, the 313-residue chain is HTH-type transcriptional regulator CysB (313 aa).

One can recognise an HTH lysR-type domain in the interval 1-59 (MNLHQFRFVREAVRQNFNLTEAAKALYTSQPGVSKAIIELEDELGVEIFTRHGKRVRSL). Residues 19-38 (LTEAAKALYTSQPGVSKAII) constitute a DNA-binding region (H-T-H motif).

It belongs to the LysR transcriptional regulatory family.

Its function is as follows. Transcriptional regulator preferentially involved in the control of sulfate transport and reduction. Binds to DNA at target promoter regions. This is HTH-type transcriptional regulator CysB from Burkholderia cenocepacia (strain ATCC BAA-245 / DSM 16553 / LMG 16656 / NCTC 13227 / J2315 / CF5610) (Burkholderia cepacia (strain J2315)).